The primary structure comprises 631 residues: Clathrin interactor 1 (631 aa).

The ENTH domain occupies 24–157 (NVVMNYSEIE…QDDDRLREER (134 aa)). An a 1,2-diacyl-sn-glycero-3-phospho-(1D-myo-inositol-4,5-bisphosphate)-binding site is contributed by arginine 37. The segment at 60 to 62 (FMY) is interaction with VTI1B. Residue arginine 75 participates in a 1,2-diacyl-sn-glycero-3-phospho-(1D-myo-inositol-4,5-bisphosphate) binding. Interaction with VTI1B stretches follow at residues 102 to 104 (SER) and 150 to 161 (DDRLREERKKAK). Phosphoserine is present on residues serine 171, serine 174, serine 213, serine 218, serine 235, serine 253, and serine 307. The interval 227 to 339 (FRRKDREDSP…SSGDLVDLFD (113 aa)) is disordered. A compositionally biased stretch (basic and acidic residues) spans 230 to 247 (KDREDSPERCSDSDEEKK). The span at 308 to 318 (PDQNASTHTPQ) shows a compositional bias: polar residues. The residue at position 316 (threonine 316) is a Phosphothreonine. Residues 319-331 (SSAKPSVPSSKSS) are compositionally biased toward low complexity. Phosphoserine is present on residues serine 320 and serine 630.

It belongs to the epsin family. Binds clathrin heavy chain and AP-2. Interacts with VTI1B. Interacts with GGA2 (via GAE domain). Interacts with AP1G1 (via GAE domain). Interacts with AP1G2 (via GAE domain).

It is found in the cytoplasm. The protein resides in the perinuclear region. It localises to the membrane. The protein localises to the cytoplasmic vesicle. Its subcellular location is the clathrin-coated vesicle. In terms of biological role, binds to membranes enriched in phosphatidylinositol 4,5-bisphosphate (PtdIns(4,5)P2). May have a role in transport via clathrin-coated vesicles from the trans-Golgi network to endosomes. Stimulates clathrin assembly. This chain is Clathrin interactor 1 (Clint1), found in Mus musculus (Mouse).